The chain runs to 364 residues: Histidinol-phosphate aminotransferase (364 aa).

An N6-(pyridoxal phosphate)lysine modification is found at K226.

The protein belongs to the class-II pyridoxal-phosphate-dependent aminotransferase family. Histidinol-phosphate aminotransferase subfamily. Homodimer. Pyridoxal 5'-phosphate is required as a cofactor.

It carries out the reaction L-histidinol phosphate + 2-oxoglutarate = 3-(imidazol-4-yl)-2-oxopropyl phosphate + L-glutamate. Its pathway is amino-acid biosynthesis; L-histidine biosynthesis; L-histidine from 5-phospho-alpha-D-ribose 1-diphosphate: step 7/9. The chain is Histidinol-phosphate aminotransferase from Campylobacter jejuni subsp. jejuni serotype O:6 (strain 81116 / NCTC 11828).